The following is a 411-amino-acid chain: Dual specificity protein phosphatase Mpk3 (411 aa).

Residues 22 to 149 (DSKDLILLDC…FRQAFPEWCE (128 aa)) enclose the Rhodanese domain. Residues 184–197 (DSACSSSAESSDCE) show a composition bias toward low complexity. The interval 184-209 (DSACSSSAESSDCESSSHHHHHHSHH) is disordered. A Tyrosine-protein phosphatase domain is found at 214–358 (APVEIIPGLL…LLSFESQLRL (145 aa)). Catalysis depends on Cys-302, which acts as the Phosphocysteine intermediate.

The protein belongs to the protein-tyrosine phosphatase family. Non-receptor class dual specificity subfamily. Interacts (via N-terminal region) with phosphorylated rl. As to expression, ubiquitous expression in eye and wing imaginal disks. Enriched in ovary.

Its subcellular location is the cytoplasm. It carries out the reaction O-phospho-L-tyrosyl-[protein] + H2O = L-tyrosyl-[protein] + phosphate. It catalyses the reaction O-phospho-L-seryl-[protein] + H2O = L-seryl-[protein] + phosphate. The enzyme catalyses O-phospho-L-threonyl-[protein] + H2O = L-threonyl-[protein] + phosphate. With respect to regulation, activity abolished by tyrosine phosphatase inhibitor sodium vanadate. Activated by rl. In terms of biological role, negatively regulates the activity of members of the MAP kinase family in response to changes in the cellular environment. Has a specificity for the ERK family. Acts as a negative regulator in a variety of developmental processes including cell differentiation and proliferation controlled by the Ras/ERK pathway. Suppresses the photoreceptor cell differentiation and wing vein formation. Required for proper oogenesis and early embryogenesis. Functions autonomously in a subset of photoreceptor progenitor cells in eye imaginal disks. Also appears to be required in surrounding non-neuronal cells for ommatidial patterning and photoreceptor differentiation. Plays a role in the maintenance of epithelial integrity during tracheal development. This Drosophila melanogaster (Fruit fly) protein is Dual specificity protein phosphatase Mpk3 (Mkp3).